The chain runs to 294 residues: Indole-3-glycerol phosphate synthase (294 aa).

It belongs to the TrpC family.

It catalyses the reaction 1-(2-carboxyphenylamino)-1-deoxy-D-ribulose 5-phosphate + H(+) = (1S,2R)-1-C-(indol-3-yl)glycerol 3-phosphate + CO2 + H2O. It functions in the pathway amino-acid biosynthesis; L-tryptophan biosynthesis; L-tryptophan from chorismate: step 4/5. The sequence is that of Indole-3-glycerol phosphate synthase from Crocosphaera subtropica (strain ATCC 51142 / BH68) (Cyanothece sp. (strain ATCC 51142)).